The sequence spans 302 residues: Pyridoxal 5'-phosphate synthase subunit PdxS (302 aa).

A D-ribose 5-phosphate-binding site is contributed by Asp-32. The active-site Schiff-base intermediate with D-ribose 5-phosphate is the Lys-89. Gly-161 serves as a coordination point for D-ribose 5-phosphate. Arg-173 contacts D-glyceraldehyde 3-phosphate. Residues Gly-222 and Gly-243–Ser-244 contribute to the D-ribose 5-phosphate site. Residues Ala-276–Asn-302 are disordered.

The protein belongs to the PdxS/SNZ family. In terms of assembly, in the presence of PdxT, forms a dodecamer of heterodimers.

The enzyme catalyses aldehydo-D-ribose 5-phosphate + D-glyceraldehyde 3-phosphate + L-glutamine = pyridoxal 5'-phosphate + L-glutamate + phosphate + 3 H2O + H(+). It functions in the pathway cofactor biosynthesis; pyridoxal 5'-phosphate biosynthesis. Its function is as follows. Catalyzes the formation of pyridoxal 5'-phosphate from ribose 5-phosphate (RBP), glyceraldehyde 3-phosphate (G3P) and ammonia. The ammonia is provided by the PdxT subunit. Can also use ribulose 5-phosphate and dihydroxyacetone phosphate as substrates, resulting from enzyme-catalyzed isomerization of RBP and G3P, respectively. The polypeptide is Pyridoxal 5'-phosphate synthase subunit PdxS (Halobacterium salinarum (strain ATCC 29341 / DSM 671 / R1)).